A 271-amino-acid chain; its full sequence is Phosphate import ATP-binding protein PstB 2 (271 aa).

One can recognise an ABC transporter domain in the interval 25-266; that stretch reads MATEDLHVYY…PQQKQTEDYI (242 aa). 57–64 contributes to the ATP binding site; the sequence is GPSGCGKS.

This sequence belongs to the ABC transporter superfamily. Phosphate importer (TC 3.A.1.7) family. The complex is composed of two ATP-binding proteins (PstB), two transmembrane proteins (PstC and PstA) and a solute-binding protein (PstS).

It localises to the cell membrane. The enzyme catalyses phosphate(out) + ATP + H2O = ADP + 2 phosphate(in) + H(+). Part of the ABC transporter complex PstSACB involved in phosphate import. Responsible for energy coupling to the transport system. In Listeria monocytogenes serotype 4b (strain F2365), this protein is Phosphate import ATP-binding protein PstB 2.